The following is a 113-amino-acid chain: UPF0321 protein C569.02c (113 aa).

An N-terminal signal peptide occupies residues 1–17 (MLLLFCICCAFIKLVLA). N-linked (GlcNAc...) asparagine glycans are attached at residues asparagine 20, asparagine 39, and asparagine 65.

This sequence belongs to the UPF0321 family.

The polypeptide is UPF0321 protein C569.02c (Schizosaccharomyces pombe (strain 972 / ATCC 24843) (Fission yeast)).